Reading from the N-terminus, the 589-residue chain is ATP-dependent lipid A-core flippase (589 aa).

6 helical membrane-spanning segments follow: residues 33–53 (VLAI…AWII), 70–90 (LWVP…TFAS), 148–168 (VVVL…MTYL), 170–190 (GWLV…VTAA), 262–282 (LGAV…VILE), and 283–303 (TISP…LPPL). The region spanning 33–315 (VLAIVCMVLA…VIGVNAEIQK (283 aa)) is the ABC transmembrane type-1 domain. An ABC transporter domain is found at 347-583 (IEFDRVAFRY…NGHYASLHRV (237 aa)). 381-388 (GRSGSGKT) lines the ATP pocket.

Belongs to the ABC transporter superfamily. Lipid exporter (TC 3.A.1.106) family. As to quaternary structure, homodimer.

The protein localises to the cell inner membrane. It catalyses the reaction ATP + H2O + lipid A-core oligosaccharideSide 1 = ADP + phosphate + lipid A-core oligosaccharideSide 2.. Its function is as follows. Involved in lipopolysaccharide (LPS) biosynthesis. Translocates lipid A-core from the inner to the outer leaflet of the inner membrane. Transmembrane domains (TMD) form a pore in the inner membrane and the ATP-binding domain (NBD) is responsible for energy generation. The chain is ATP-dependent lipid A-core flippase from Alkalilimnicola ehrlichii (strain ATCC BAA-1101 / DSM 17681 / MLHE-1).